A 272-amino-acid polypeptide reads, in one-letter code: Aquaporin FA-CHIP (272 aa).

The Cytoplasmic portion of the chain corresponds to 1–17; sequence MASEFKKKAFWRAVIAE. The chain crosses the membrane as a helical span at residues 18 to 35; sequence FLAMILFVFISIGAALGF. The Extracellular segment spans residues 36-52; the sequence is NFPIEEKANQTVGRSQD. Residue asparagine 44 is glycosylated (N-linked (GlcNAc...) asparagine). The helical transmembrane segment at 53 to 71 threads the bilayer; it reads IVKVSLAFGISIATMAQSV. At 72-97 the chain is on the cytoplasmic side; the sequence is GHVSGAHLNPAVTLGCLLSCQISILK. The NPA 1 signature appears at 80 to 82; it reads NPA. Residues 98-119 form a helical membrane-spanning segment; the sequence is AVMYIIAQCLGAVVATAILSGI. At 120-139 the chain is on the extracellular side; it reads TSGLENNSLGLNGLSPGVSA. A glycan (N-linked (GlcNAc...) asparagine) is linked at asparagine 125. Residues 140 to 160 form a helical membrane-spanning segment; that stretch reads GQGLGVEILVTFQLVLCVVAV. Residues 161-168 lie on the Cytoplasmic side of the membrane; sequence TDRRRHDV. Residues 169 to 188 traverse the membrane as a helical segment; it reads SGSVPLAIGLSVALGHLIAI. The Extracellular segment spans residues 189-214; sequence DYTGCGMNPARSFGSAVLTKNFTYHW. Residues 196-198 carry the NPA 2 motif; that stretch reads NPA. An N-linked (GlcNAc...) asparagine glycan is attached at asparagine 209. Residues 215–236 form a helical membrane-spanning segment; the sequence is IFWVGPMIGGAAAAIIYDFILA. Residues 237–272 lie on the Cytoplasmic side of the membrane; sequence PRTSDLTDRMKVWTNGQVEEYELDGDDNTRVEMKPK.

This sequence belongs to the MIP/aquaporin (TC 1.A.8) family.

It localises to the membrane. Its function is as follows. Forms a water-specific channel. The sequence is that of Aquaporin FA-CHIP (AQPA) from Pelophylax lessonae (Pool frog).